The following is a 275-amino-acid chain: Phosphonoacetaldehyde hydrolase (275 aa).

Aspartate 15 (nucleophile) is an active-site residue. Residues aspartate 15 and alanine 17 each coordinate Mg(2+). The active-site Schiff-base intermediate with substrate is lysine 56. Residue aspartate 189 coordinates Mg(2+).

It belongs to the HAD-like hydrolase superfamily. PhnX family. In terms of assembly, homodimer. It depends on Mg(2+) as a cofactor.

The catalysed reaction is phosphonoacetaldehyde + H2O = acetaldehyde + phosphate + H(+). In terms of biological role, involved in phosphonate degradation. This Pseudomonas fluorescens (strain SBW25) protein is Phosphonoacetaldehyde hydrolase.